Consider the following 638-residue polypeptide: Growth hormone receptor (638 aa).

The signal sequence occupies residues 1 to 18; sequence MDLWQLLLTLALAGSSDA. The Extracellular portion of the chain corresponds to 19 to 264; sequence FSGSEATAAI…SQFTCEEDFY (246 aa). Residue Asn-46 is glycosylated (N-linked (GlcNAc...) asparagine). Intrachain disulfides connect Cys-56–Cys-66 and Cys-101–Cys-112. Asn-115 carries N-linked (GlcNAc...) asparagine glycosylation. Cys-126 and Cys-140 form a disulfide bridge. A Fibronectin type-III domain is found at 151–254; it reads PPIALNWTLL…EVLYVTLPQM (104 aa). Residues Asn-156, Asn-161, and Asn-200 are each glycosylated (N-linked (GlcNAc...) asparagine). The short motif at 240-244 is the WSXWS motif element; that stretch reads YGEFS. Residues 260–262 form a required for ADAM17-mediated proteolysis region; it reads EED. Residues 265–288 form a helical membrane-spanning segment; that stretch reads FPWLLIIIFGIFGLTVMLFVFLFS. Topologically, residues 289-638 are cytoplasmic; the sequence is KQQRIKMLIL…STDQLNKIMP (350 aa). Residues 294-379 form a required for JAK2 binding region; that stretch reads KMLILPPVPV…HEKSHSNLGV (86 aa). Positions 297-305 match the Box 1 motif motif; it reads ILPPVPVPK. The UbE motif signature appears at 340–349; the sequence is DSWVEFIELD. Ser-341 carries the phosphoserine modification. Residues 353–391 form a disordered region; that stretch reads PDEKTEESDTDRLLSSDHEKSHSNLGVKDGDSGRTSCCE. Residues 362 to 384 are compositionally biased toward basic and acidic residues; the sequence is TDRLLSSDHEKSHSNLGVKDGDS. 2 positions are modified to phosphotyrosine; by JAK2: Tyr-487 and Tyr-595.

Belongs to the type I cytokine receptor family. Type 1 subfamily. On growth hormone (GH) binding, forms homodimers and binds JAK2 via a box 1-containing domain. The soluble form (GHBP) is produced by phorbol ester-promoted proteolytic cleavage at the cell surface (shedding) by ADAM17/TACE. Shedding is inhibited by growth hormone (GH) binding to the receptor probably due to a conformational change in GHR rendering the receptor inaccessible to ADAM17. Post-translationally, on GH binding, phosphorylated on tyrosine residues in the cytoplasmic domain by JAK2. In terms of processing, ubiquitinated by the ECS(SOCS2) complex following ligand-binding and phosphorylation by JAK2, leading to its degradation by the proteasome. Regulation by the ECS(SOCS2) complex acts as a negative feedback loop of growth hormone receptor signaling. Ubiquitination is not sufficient for GHR internalization. As to expression, expressed in various tissues with high expression in liver and skeletal muscle. In terms of tissue distribution, isoform 2 is expressed in lung, stomach and muscle. Predominantly expressed in kidney, bladder, adrenal gland and brain stem. Highly expressed in placental villi.

The protein localises to the cell membrane. The protein resides in the secreted. In terms of biological role, receptor for pituitary gland growth hormone (GH1) involved in regulating postnatal body growth. On ligand binding, couples to the JAK2/STAT5 pathway. Its function is as follows. The soluble form (GHBP) acts as a reservoir of growth hormone in plasma and may be a modulator/inhibitor of GH signaling. Up-regulates the production of the soluble Growth hormone-binding protein form (GHBP) and acts as a negative inhibitor of growth hormone signaling. The protein is Growth hormone receptor (GHR) of Homo sapiens (Human).